The sequence spans 382 residues: Dodecanoyl-[acyl-carrier-protein] hydrolase, chloroplastic (382 aa).

The transit peptide at 1-83 directs the protein to the chloroplast; it reads MATTSLASAF…FSAAEKQWTN (83 aa). Catalysis depends on residues asparagine 283, histidine 285, and cysteine 320.

The protein belongs to the acyl-ACP thioesterase family. As to quaternary structure, forms homodimers. In terms of tissue distribution, expressed in developing cotyledons. Not detected in leaves.

The protein resides in the plastid. Its subcellular location is the chloroplast. It carries out the reaction dodecanoyl-[ACP] + H2O = dodecanoate + holo-[ACP] + H(+). Plays an essential role in chain termination during de novo fatty acid synthesis. High thioesterase activity for lauroyl-ACP versus other acyl-ACPs. The protein is Dodecanoyl-[acyl-carrier-protein] hydrolase, chloroplastic of Umbellularia californica (California bay laurel).